Here is a 275-residue protein sequence, read N- to C-terminus: Ribosomal RNA small subunit methyltransferase A (275 aa).

6 residues coordinate S-adenosyl-L-methionine: asparagine 21, leucine 23, glycine 48, glutamate 69, aspartate 94, and asparagine 115.

It belongs to the class I-like SAM-binding methyltransferase superfamily. rRNA adenine N(6)-methyltransferase family. RsmA subfamily.

Its subcellular location is the cytoplasm. It carries out the reaction adenosine(1518)/adenosine(1519) in 16S rRNA + 4 S-adenosyl-L-methionine = N(6)-dimethyladenosine(1518)/N(6)-dimethyladenosine(1519) in 16S rRNA + 4 S-adenosyl-L-homocysteine + 4 H(+). Its function is as follows. Specifically dimethylates two adjacent adenosines (A1518 and A1519) in the loop of a conserved hairpin near the 3'-end of 16S rRNA in the 30S particle. May play a critical role in biogenesis of 30S subunits. This chain is Ribosomal RNA small subunit methyltransferase A, found in Clostridium botulinum (strain Kyoto / Type A2).